The sequence spans 319 residues: Lipoyl synthase (319 aa).

The interval 6–29 is disordered; that stretch reads DTVSANPVRPRHPEKAARPDALSP. Residues 16-29 are compositionally biased toward basic and acidic residues; that stretch reads RHPEKAARPDALSP. The [4Fe-4S] cluster site is built by cysteine 61, cysteine 66, cysteine 72, cysteine 87, cysteine 91, cysteine 94, and serine 300. In terms of domain architecture, Radical SAM core spans 73-289; that stretch reads WDKKHATFMI…QTTAYAKGFL (217 aa).

It belongs to the radical SAM superfamily. Lipoyl synthase family. The cofactor is [4Fe-4S] cluster.

It is found in the cytoplasm. It catalyses the reaction [[Fe-S] cluster scaffold protein carrying a second [4Fe-4S](2+) cluster] + N(6)-octanoyl-L-lysyl-[protein] + 2 oxidized [2Fe-2S]-[ferredoxin] + 2 S-adenosyl-L-methionine + 4 H(+) = [[Fe-S] cluster scaffold protein] + N(6)-[(R)-dihydrolipoyl]-L-lysyl-[protein] + 4 Fe(3+) + 2 hydrogen sulfide + 2 5'-deoxyadenosine + 2 L-methionine + 2 reduced [2Fe-2S]-[ferredoxin]. It participates in protein modification; protein lipoylation via endogenous pathway; protein N(6)-(lipoyl)lysine from octanoyl-[acyl-carrier-protein]: step 2/2. Catalyzes the radical-mediated insertion of two sulfur atoms into the C-6 and C-8 positions of the octanoyl moiety bound to the lipoyl domains of lipoate-dependent enzymes, thereby converting the octanoylated domains into lipoylated derivatives. The polypeptide is Lipoyl synthase (Rhodopseudomonas palustris (strain ATCC BAA-98 / CGA009)).